Here is a 377-residue protein sequence, read N- to C-terminus: Cytoplasmic tRNA 2-thiolation protein 1 (377 aa).

It belongs to the TtcA family. CTU1/NCS6/ATPBD3 subfamily.

It is found in the cytoplasm. The protein operates within tRNA modification; 5-methoxycarbonylmethyl-2-thiouridine-tRNA biosynthesis. Plays a central role in 2-thiolation of mcm(5)S(2)U at tRNA wobble positions of tRNA(Lys), tRNA(Glu) and tRNA(Gln). Directly binds tRNAs and probably acts by catalyzing adenylation of tRNAs, an intermediate required for 2-thiolation. It is unclear whether it acts as a sulfurtransferase that transfers sulfur from thiocarboxylated URM1 onto the uridine of tRNAs at wobble position. Prior mcm(5) tRNA modification by the elongator complex is required for 2-thiolation. May also be involved in protein urmylation. In Debaryomyces hansenii (strain ATCC 36239 / CBS 767 / BCRC 21394 / JCM 1990 / NBRC 0083 / IGC 2968) (Yeast), this protein is Cytoplasmic tRNA 2-thiolation protein 1.